A 227-amino-acid polypeptide reads, in one-letter code: ATP synthase F(0) complex subunit a (227 aa).

Transmembrane regions (helical) follow at residues L14–P34, W69–L89, Q98–L118, E132–I152, F180–L200, and L202–Y222.

Belongs to the ATPase A chain family. In terms of assembly, component of the ATP synthase complex composed at least of ATP5F1A/subunit alpha, ATP5F1B/subunit beta, ATP5MC1/subunit c (homooctomer), MT-ATP6/subunit a, MT-ATP8/subunit 8, ATP5ME/subunit e, ATP5MF/subunit f, ATP5MG/subunit g, ATP5MK/subunit k, ATP5MJ/subunit j, ATP5F1C/subunit gamma, ATP5F1D/subunit delta, ATP5F1E/subunit epsilon, ATP5PF/subunit F6, ATP5PB/subunit b, ATP5PD/subunit d, ATP5PO/subunit OSCP. ATP synthase complex consists of a soluble F(1) head domain (subunits alpha(3) and beta(3)) - the catalytic core - and a membrane F(0) domain - the membrane proton channel (subunits c, a, 8, e, f, g, k and j). These two domains are linked by a central stalk (subunits gamma, delta, and epsilon) rotating inside the F1 region and a stationary peripheral stalk (subunits F6, b, d, and OSCP). Interacts with DNAJC30; interaction is direct.

The protein resides in the mitochondrion inner membrane. The enzyme catalyses H(+)(in) = H(+)(out). Functionally, subunit a, of the mitochondrial membrane ATP synthase complex (F(1)F(0) ATP synthase or Complex V) that produces ATP from ADP in the presence of a proton gradient across the membrane which is generated by electron transport complexes of the respiratory chain. ATP synthase complex consist of a soluble F(1) head domain - the catalytic core - and a membrane F(1) domain - the membrane proton channel. These two domains are linked by a central stalk rotating inside the F(1) region and a stationary peripheral stalk. During catalysis, ATP synthesis in the catalytic domain of F(1) is coupled via a rotary mechanism of the central stalk subunits to proton translocation. With the subunit c (ATP5MC1), forms the proton-conducting channel in the F(0) domain, that contains two crucial half-channels (inlet and outlet) that facilitate proton movement from the mitochondrial intermembrane space (IMS) into the matrix. Protons are taken up via the inlet half-channel and released through the outlet half-channel, following a Grotthuss mechanism. This chain is ATP synthase F(0) complex subunit a, found in Tetraodon nigroviridis (Spotted green pufferfish).